A 215-amino-acid polypeptide reads, in one-letter code: RWD domain-containing protein C1393.09c (215 aa).

Residues 7-114 enclose the RWD domain; it reads EEREILESIY…SVAKEETNAI (108 aa).

It is found in the cytoplasm. The protein resides in the nucleus. In Schizosaccharomyces pombe (strain 972 / ATCC 24843) (Fission yeast), this protein is RWD domain-containing protein C1393.09c.